The primary structure comprises 416 residues: Serine hydroxymethyltransferase (416 aa).

(6S)-5,6,7,8-tetrahydrofolate contacts are provided by residues L121 and 125–127 (GHL). K230 is subject to N6-(pyridoxal phosphate)lysine. 354–356 (SPF) contributes to the (6S)-5,6,7,8-tetrahydrofolate binding site.

Belongs to the SHMT family. As to quaternary structure, homodimer. It depends on pyridoxal 5'-phosphate as a cofactor.

It localises to the cytoplasm. The enzyme catalyses (6R)-5,10-methylene-5,6,7,8-tetrahydrofolate + glycine + H2O = (6S)-5,6,7,8-tetrahydrofolate + L-serine. It participates in one-carbon metabolism; tetrahydrofolate interconversion. The protein operates within amino-acid biosynthesis; glycine biosynthesis; glycine from L-serine: step 1/1. Functionally, catalyzes the reversible interconversion of serine and glycine with tetrahydrofolate (THF) serving as the one-carbon carrier. This reaction serves as the major source of one-carbon groups required for the biosynthesis of purines, thymidylate, methionine, and other important biomolecules. Also exhibits THF-independent aldolase activity toward beta-hydroxyamino acids, producing glycine and aldehydes, via a retro-aldol mechanism. This is Serine hydroxymethyltransferase from Prochlorococcus marinus (strain MIT 9211).